A 463-amino-acid polypeptide reads, in one-letter code: Exodeoxyribonuclease 7 large subunit (463 aa).

It belongs to the XseA family. Heterooligomer composed of large and small subunits.

The protein resides in the cytoplasm. The enzyme catalyses Exonucleolytic cleavage in either 5'- to 3'- or 3'- to 5'-direction to yield nucleoside 5'-phosphates.. Functionally, bidirectionally degrades single-stranded DNA into large acid-insoluble oligonucleotides, which are then degraded further into small acid-soluble oligonucleotides. The polypeptide is Exodeoxyribonuclease 7 large subunit (Pseudomonas syringae pv. syringae (strain B728a)).